Reading from the N-terminus, the 300-residue chain is Cathepsin B-like CP2 (300 aa).

The N-terminal stretch at 1-19 (MKLFLLAAAAFSAPALTVS) is a signal peptide. Cystine bridges form between C88–C115, C98–C141, and C134–C177. C101 is a catalytic residue. Catalysis depends on residues H245 and N266.

This sequence belongs to the peptidase C1 family.

The protein resides in the vacuole. Thiol protease which is required for parasite excystation and invasion of the proximal small intestine of the human host. This chain is Cathepsin B-like CP2 (CP2), found in Giardia intestinalis (Giardia lamblia).